The following is a 151-amino-acid chain: Macrodomain Ter protein (151 aa).

Belongs to the MatP family. In terms of assembly, homodimer.

It localises to the cytoplasm. In terms of biological role, required for spatial organization of the terminus region of the chromosome (Ter macrodomain) during the cell cycle. Prevents early segregation of duplicated Ter macrodomains during cell division. Binds specifically to matS, which is a 13 bp signature motif repeated within the Ter macrodomain. In Yersinia pseudotuberculosis serotype IB (strain PB1/+), this protein is Macrodomain Ter protein.